Reading from the N-terminus, the 812-residue chain is Ras guanine nucleotide exchange factor J (812 aa).

Low complexity-rich tracts occupy residues 1–36 (MSNPVSINNSGSISNSNLNNESLSPSRLSSSPNSKS) and 53–65 (LLNRSSSGNNLNN). The segment at 1 to 146 (MSNPVSINNS…GGSSGGLNMS (146 aa)) is disordered. Positions 75–86 (SFTSNYQNIYTP) are enriched in polar residues. A compositionally biased stretch (low complexity) spans 87–101 (NNNSYNSSNNNNNNN). Residues 131–141 (NSGGGGGGSSG) show a composition bias toward gly residues. The region spanning 214–246 (GRDTMLQLILQHLQFEGLMDSRKLLEEEARVQY) is the LisH domain. Positions 320 to 382 (IIYVDDKEKE…NNSIGNSNSY (63 aa)) are disordered. The segment covering 323 to 343 (VDDKEKEKEKEKEKEKEKDKF) has biased composition (basic and acidic residues). Positions 344 to 382 (GPNSTNSLSGSGSSPNIPSGMNNNSSSIGNNSIGNSNSY) are enriched in low complexity. The region spanning 409-535 (NKPQVKAASL…LSESLNAKIK (127 aa)) is the N-terminal Ras-GEF domain. A Ras-GEF domain is found at 573 to 804 (DEEEIARQLT…YSRSMSFEPR (232 aa)).

Functionally, promotes the exchange of Ras-bound GDP by GTP. In Dictyostelium discoideum (Social amoeba), this protein is Ras guanine nucleotide exchange factor J (gefJ).